The primary structure comprises 231 residues: Probable cell wall protein ARB_06477 (231 aa).

The first 17 residues, 1 to 17, serve as a signal peptide directing secretion; sequence MRSVLYLLFTAVAAVAA. The interval 107 to 206 is disordered; it reads TPSFMVDGAT…TGMPTSSGAP (100 aa). Residues 121–204 are compositionally biased toward low complexity; that stretch reads TGPTTSRTSM…SSTGMPTSSG (84 aa). S203 is lipidated: GPI-anchor amidated serine. A propeptide spans 204 to 231 (removed in mature form); it reads GAPDPNGAVSLALPGGLLSIVLSLMALL.

This sequence belongs to the SRP1/TIP1 family. Post-translationally, the GPI-anchor is attached to the protein in the endoplasmic reticulum and serves to target the protein to the cell surface. There, the glucosamine-inositol phospholipid moiety is cleaved off and the GPI-modified mannoprotein is covalently attached via its lipidless GPI glycan remnant to the 1,6-beta-glucan of the outer cell wall layer.

Its subcellular location is the cell membrane. The protein localises to the secreted. The protein resides in the cell wall. In terms of biological role, probable component of the cell wall. This chain is Probable cell wall protein ARB_06477, found in Arthroderma benhamiae (strain ATCC MYA-4681 / CBS 112371) (Trichophyton mentagrophytes).